Here is a 282-residue protein sequence, read N- to C-terminus: Bis(5'-nucleosyl)-tetraphosphatase, symmetrical (282 aa).

The protein belongs to the Ap4A hydrolase family.

The enzyme catalyses P(1),P(4)-bis(5'-adenosyl) tetraphosphate + H2O = 2 ADP + 2 H(+). In terms of biological role, hydrolyzes diadenosine 5',5'''-P1,P4-tetraphosphate to yield ADP. The protein is Bis(5'-nucleosyl)-tetraphosphatase, symmetrical of Burkholderia pseudomallei (strain 668).